A 182-amino-acid polypeptide reads, in one-letter code: SAGA-associated factor 11 homolog (182 aa).

A disordered region spans residues 61–84 (GSGAAVEGEPEDSKPYTIVDQPDT). The segment at 98–119 (CHCPNCNRIVAASRFAPHLEKC) adopts an SGF11-type zinc-finger fold. The interval 133–182 (RIANTRDVGTGNYFGGDEDDEDDADWSGEKRKKKISQVRTNGSKKNGKTS) is disordered. The segment covering 148 to 158 (GDEDDEDDADW) has biased composition (acidic residues).

The protein belongs to the SGF11 family. In terms of assembly, component of some SAGA transcription coactivator-HAT complexes. Within the SAGA complex, participates in a subcomplex of SAGA called the DUB module (deubiquitination module).

It is found in the nucleus. Component of the transcription regulatory histone acetylation (HAT) complex SAGA, a multiprotein complex that activates transcription by remodeling chromatin and mediating histone acetylation and deubiquitination. Within the SAGA complex, participates in a subcomplex that specifically deubiquitinates histone H2B. The SAGA complex is recruited to specific gene promoters by activators, where it is required for transcription. This Anopheles gambiae (African malaria mosquito) protein is SAGA-associated factor 11 homolog.